Here is a 329-residue protein sequence, read N- to C-terminus: UPF0421 protein SH1063 (329 aa).

The next 5 helical transmembrane spans lie at 25–45 (LFCLMLDLTPIFAILTAIVTI), 60–80 (LPATVIGALFAVLFTFIFGDP), 87–107 (FSALFTILVCTKLNLQVGTTV), 108–128 (AVLTSVAMIPGIHDAYLFNFF), and 131–151 (LLTALIGLVTAGLVNFIVLPP).

The protein belongs to the UPF0421 family.

The protein localises to the cell membrane. The chain is UPF0421 protein SH1063 from Staphylococcus haemolyticus (strain JCSC1435).